A 123-amino-acid chain; its full sequence is Protein Wnt-7b (123 aa).

A lipid anchor (O-palmitoleoyl serine; by PORCN) is attached at S1. A disordered linker region spans residues 33 to 61 (VEVVRASRLRQPTFLKIKQIKSYQKPMET). C89 and C104 are oxidised to a cystine. A glycan (N-linked (GlcNAc...) asparagine) is linked at N90.

Belongs to the Wnt family. Palmitoleoylation is required for efficient binding to frizzled receptors. Depalmitoleoylation leads to Wnt signaling pathway inhibition.

It localises to the secreted. Its subcellular location is the extracellular space. The protein localises to the extracellular matrix. Its function is as follows. Ligand for members of the frizzled family of seven transmembrane receptors that functions in the canonical Wnt/beta-catenin signaling pathway. Required for normal fusion of the chorion and the allantois during placenta development. Required for central nervous system (CNS) angiogenesis and blood-brain barrier regulation. This is Protein Wnt-7b (WNT7B) from Anser caerulescens (Snow goose).